Here is a 267-residue protein sequence, read N- to C-terminus: Undecaprenyl-diphosphatase (267 aa).

8 helical membrane passes run 1–21 (MSYF…FLPI), 39–59 (QGLA…VLYF), 83–103 (AKLA…GFVM), 111–131 (LRSA…LWYV), 149–169 (ALFI…RSGA), 189–209 (FLMS…KLVT), 218–238 (FLLT…HFFL), and 245–265 (GMTP…AFLL).

The protein belongs to the UppP family.

It is found in the cell inner membrane. It carries out the reaction di-trans,octa-cis-undecaprenyl diphosphate + H2O = di-trans,octa-cis-undecaprenyl phosphate + phosphate + H(+). In terms of biological role, catalyzes the dephosphorylation of undecaprenyl diphosphate (UPP). Confers resistance to bacitracin. The protein is Undecaprenyl-diphosphatase of Vibrio cholerae serotype O1 (strain ATCC 39315 / El Tor Inaba N16961).